A 433-amino-acid chain; its full sequence is Poly(A) ribonuclease POP2 (433 aa).

At Met-1 the chain carries N-acetylmethionine. A disordered region spans residues 78 to 98; that stretch reads LLTQQQQQQQQQQQPFNIGTP. Positions 81–91 are enriched in low complexity; the sequence is QQQQQQQQQQQ. Thr-97 is subject to Phosphothreonine; by YAK1. A divalent metal cation-binding residues include Ser-188, Glu-190, Asp-310, and Gln-394.

This sequence belongs to the CAF1 family. As to quaternary structure, subunit of the 1.0 MDa CCR4-NOT core complex that contains CCR4, CAF1, NOT1, NOT2, NOT3, NOT4, NOT5, CAF40 and CAF130. In the complex interacts with NOT1. The core complex probably is part of a less characterized 1.9 MDa CCR4-NOT complex. The cofactor is Mg(2+).

It localises to the cytoplasm. The protein resides in the nucleus. The enzyme catalyses Exonucleolytic cleavage of poly(A) to 5'-AMP.. Functionally, acts as a probably catalytic component of the CCR4-NOT core complex, which in the nucleus seems to be a general transcription factor, and in the cytoplasm the major mRNA deadenylase involved in mRNA turnover. In vitro, POP2 has 3'-exoribonuclease activity with a preference for poly(A) RNAs, but also degrades poly(U) and poly(C) RNAs. Is part of a glucose-sensing system involved in growth control in response to glucose availability. The sequence is that of Poly(A) ribonuclease POP2 (POP2) from Saccharomyces cerevisiae (strain ATCC 204508 / S288c) (Baker's yeast).